We begin with the raw amino-acid sequence, 458 residues long: ATP synthase subunit beta (458 aa).

Residue 148-155 participates in ATP binding; that stretch reads GGAGVGKT.

The protein belongs to the ATPase alpha/beta chains family. As to quaternary structure, F-type ATPases have 2 components, CF(1) - the catalytic core - and CF(0) - the membrane proton channel. CF(1) has five subunits: alpha(3), beta(3), gamma(1), delta(1), epsilon(1). CF(0) has three main subunits: a(1), b(2) and c(9-12). The alpha and beta chains form an alternating ring which encloses part of the gamma chain. CF(1) is attached to CF(0) by a central stalk formed by the gamma and epsilon chains, while a peripheral stalk is formed by the delta and b chains.

It localises to the cell inner membrane. It carries out the reaction ATP + H2O + 4 H(+)(in) = ADP + phosphate + 5 H(+)(out). Its function is as follows. Produces ATP from ADP in the presence of a proton gradient across the membrane. The catalytic sites are hosted primarily by the beta subunits. In Shewanella pealeana (strain ATCC 700345 / ANG-SQ1), this protein is ATP synthase subunit beta.